A 651-amino-acid polypeptide reads, in one-letter code: E3 SUMO-protein ligase PIAS1 (651 aa).

At alanine 2 the chain carries N-acetylalanine. The segment at 2-200 (ADSAELKQMV…KCDFTVQVQL (199 aa)) is required for interaction with MSX1. The region spanning 11–45 (VMSLRVSELQVLLGYAGRNKHGRKHELLTKALHLL) is the SAP domain. Residues 19 to 23 (LQVLL) carry the LXXLL motif motif. Glycyl lysine isopeptide (Lys-Gly) (interchain with G-Cter in SUMO2) cross-links involve residues lysine 40 and lysine 46. Positions 56-64 (KIKELYRRR) match the Nuclear localization signal motif. Residues 124–288 (HLTSALHPVH…SMAVYLVKQL (165 aa)) form the PINIT domain. Glycyl lysine isopeptide (Lys-Gly) (interchain with G-Cter in SUMO2) cross-links involve residues lysine 137 and lysine 238. The SP-RING-type zinc-finger motif lies at 320–405 (PDSEIATTSL…LKYCTDCDEI (86 aa)). Residues cysteine 351, histidine 353, cysteine 374, and cysteine 377 each coordinate Zn(2+). The short motif at 368-380 (KKPTWVCPVCDKK) is the Nuclear localization signal element. Lysine 453 participates in a covalent cross-link: Glycyl lysine isopeptide (Lys-Gly) (interchain with G-Cter in SUMO2). Residues 462-473 (LTIDSSSDEEEE) are SUMO1-binding. The segment at 465–511 (DSSSDEEEEEPSAKRTCPSLSPTSPLNNKGILSLPHQASPVSRTPSL) is disordered. Phosphoserine is present on residues serine 467, serine 468, serine 483, and serine 485. A compositionally biased stretch (polar residues) spans 482–491 (PSLSPTSPLN). The residue at position 487 (threonine 487) is a Phosphothreonine. Serine 488 is modified (phosphoserine). Residue lysine 493 forms a Glycyl lysine isopeptide (Lys-Gly) (interchain with G-Cter in SUMO2) linkage. A phosphoserine mark is found at serine 503, serine 510, and serine 522. 2 consecutive repeat copies span residues 520 to 523 (NTSL) and 557 to 560 (NTSL). Positions 520 to 615 (NTSLIQDYRH…GSSSGSNSSL (96 aa)) are 4 X 4 AA repeats of N-T-S-L. The 3; approximate repeat unit spans residues 598 to 601 (STSL). Residues 599-621 (TSLPTTNGSSSGSNSSLVSSNSL) show a composition bias toward low complexity. The segment at 599–632 (TSLPTTNGSSSGSNSSLVSSNSLRESHSHTVTNR) is disordered. One copy of the 4; approximate repeat lies at 612 to 615 (NSSL).

This sequence belongs to the PIAS family. Interacts with NCOA2 and AR. Interacts with NR2C1; the interaction promotes its sumoylation. Interacts with DDX21, CSRP2, AXIN1, JUN, UBE2I, SUMO1, SATB2, PLAG1, TP53 and STAT1 (dimer), following IFNA1-stimulation. Interacts with SP3 (preferentially when SUMO-modified). Interacts with KLF8; the interaction results in SUMO ligation and repression of KLF8 transcriptional activity and of its cell cycle progression into G(1) phase. Interacts with CHUK/IKKA; this interaction induces PIAS1 phosphorylation. Interacts with PTK2/FAK1; the interaction promotes its sumoylation. Interacts with DDX5. Interacts with PML. Interacts with MTA1. Interacts with SUMO1P1/SUMO5. Interacts with PRDM1/Blimp-1. Interacts (via N-terminus) with MSX1 (via C-terminus); the interaction is required for the localization of both proteins to the nuclear periphery and specific binding of MSX1 to the core enhancer region in target gene promoters. As to quaternary structure, (Microbial infection) Interacts with ebolavirus VP35; this interaction mediates the sumoylation of IRF7 and contributes to the viral inhibition of IFN-type I production. Post-translationally, sumoylated. As to expression, expressed in numerous tissues with highest level in testis.

It is found in the nucleus. Its subcellular location is the nucleus speckle. The protein resides in the PML body. It localises to the cytoplasm. The protein localises to the cytoskeleton. It participates in protein modification; protein sumoylation. Functionally, functions as an E3-type small ubiquitin-like modifier (SUMO) ligase, stabilizing the interaction between UBE2I and the substrate, and as a SUMO-tethering factor. Catalyzes sumoylation of various proteins, such as CEBPB, MRE11, MTA1, PTK2 and PML. Plays a crucial role as a transcriptional coregulation in various cellular pathways, including the STAT pathway, the p53 pathway and the steroid hormone signaling pathway. In vitro, binds A/T-rich DNA. The effects of this transcriptional coregulation, transactivation or silencing, may vary depending upon the biological context. Mediates sumoylation of MRE11, stabilizing MRE11 on chromatin during end resection. Sumoylates PML (at 'Lys-65' and 'Lys-160') and PML-RAR and promotes their ubiquitin-mediated degradation. PIAS1-mediated sumoylation of PML promotes its interaction with CSNK2A1/CK2 which in turn promotes PML phosphorylation and degradation. Enhances the sumoylation of MTA1 and may participate in its paralog-selective sumoylation. Plays a dynamic role in adipogenesis by promoting the SUMOylation and degradation of CEBPB. Mediates the nuclear mobility and localization of MSX1 to the nuclear periphery, whereby MSX1 is brought into the proximity of target myoblast differentiation factor genes. Also required for the binding of MSX1 to the core enhancer region in target gene promoter regions, independent of its sumoylation activity. Capable of binding to the core enhancer region TAAT box in the MYOD1 gene promoter. In terms of biological role, (Microbial infection) Restricts Epstein-Barr virus (EBV) lytic replication by acting as an inhibitor for transcription factors involved in lytic gene expression. The virus can use apoptotic caspases to antagonize PIAS1-mediated restriction and express its lytic genes. The chain is E3 SUMO-protein ligase PIAS1 (PIAS1) from Homo sapiens (Human).